Reading from the N-terminus, the 215-residue chain is Uridine kinase (215 aa).

16–23 (GASASGKS) contacts ATP.

It belongs to the uridine kinase family.

The protein resides in the cytoplasm. The enzyme catalyses uridine + ATP = UMP + ADP + H(+). The catalysed reaction is cytidine + ATP = CMP + ADP + H(+). The protein operates within pyrimidine metabolism; CTP biosynthesis via salvage pathway; CTP from cytidine: step 1/3. Its pathway is pyrimidine metabolism; UMP biosynthesis via salvage pathway; UMP from uridine: step 1/1. This chain is Uridine kinase, found in Aliivibrio fischeri (strain ATCC 700601 / ES114) (Vibrio fischeri).